Here is a 216-residue protein sequence, read N- to C-terminus: Adenylate kinase (216 aa).

10 to 15 contacts ATP; the sequence is GAGKGT. The NMP stretch occupies residues 30-59; sequence STGDMFRAAMKAETEMGLQAKSFIDKGALV. Residues threonine 31, arginine 36, 57 to 59, 85 to 88, and glutamine 92 each bind AMP; these read ALV and GFPR. Positions 126-163 are LID; sequence GRRICKECGATYHLEFNPPAKADVCDKCGGELYQRSDD. Arginine 127 is an ATP binding site. Residues cysteine 130 and cysteine 133 each coordinate Zn(2+). 136–137 provides a ligand contact to ATP; it reads TY. Residues cysteine 150 and cysteine 153 each contribute to the Zn(2+) site. 2 residues coordinate AMP: arginine 160 and arginine 171. Glutamine 199 contributes to the ATP binding site.

This sequence belongs to the adenylate kinase family. Monomer.

It is found in the cytoplasm. It carries out the reaction AMP + ATP = 2 ADP. Its pathway is purine metabolism; AMP biosynthesis via salvage pathway; AMP from ADP: step 1/1. In terms of biological role, catalyzes the reversible transfer of the terminal phosphate group between ATP and AMP. Plays an important role in cellular energy homeostasis and in adenine nucleotide metabolism. This Bacillus cereus (strain B4264) protein is Adenylate kinase.